Reading from the N-terminus, the 267-residue chain is Hydroxyethylthiazole kinase 2 (267 aa).

Methionine 41 provides a ligand contact to substrate. ATP contacts are provided by lysine 116 and threonine 166. Glycine 193 contributes to the substrate binding site.

It belongs to the Thz kinase family. The cofactor is Mg(2+).

It catalyses the reaction 5-(2-hydroxyethyl)-4-methylthiazole + ATP = 4-methyl-5-(2-phosphooxyethyl)-thiazole + ADP + H(+). The protein operates within cofactor biosynthesis; thiamine diphosphate biosynthesis; 4-methyl-5-(2-phosphoethyl)-thiazole from 5-(2-hydroxyethyl)-4-methylthiazole: step 1/1. Its function is as follows. Catalyzes the phosphorylation of the hydroxyl group of 4-methyl-5-beta-hydroxyethylthiazole (THZ). This Streptococcus pneumoniae (strain Hungary19A-6) protein is Hydroxyethylthiazole kinase 2.